A 246-amino-acid chain; its full sequence is tRNA pseudouridine synthase A (246 aa).

Asp-52 functions as the Nucleophile in the catalytic mechanism. Tyr-110 lines the substrate pocket.

Belongs to the tRNA pseudouridine synthase TruA family. Homodimer.

The catalysed reaction is uridine(38/39/40) in tRNA = pseudouridine(38/39/40) in tRNA. In terms of biological role, formation of pseudouridine at positions 38, 39 and 40 in the anticodon stem and loop of transfer RNAs. This chain is tRNA pseudouridine synthase A, found in Exiguobacterium sp. (strain ATCC BAA-1283 / AT1b).